The primary structure comprises 29 residues: MDTLTQKLTVLIAVLELLVALLRLIDLLK.

A helical transmembrane segment spans residues 10 to 27 (VLIAVLELLVALLRLIDL).

It is found in the cell inner membrane. Functionally, toxic component of a type I toxin-antitoxin (TA) system. Expression in the absence of its cognate antitoxin (small sRNA orzO) leads to cell stasis and a decrease in colony-forming units. Repression of ZorO toxicity requires base pairing between zorO mRNA and sRNA OrzO, as well as RNase III (rnc), suggesting the mRNA is degraded. Base pairing occurs between 18 bases in the 5' UTR of zorO mRNA and the 5' end of OrzO sRNA. sRNA OrzP, which differs only in 4 of these 18 bases, does not repress ZorO toxicity. Integration of the protein into the inner membrane damages membrane integrity and affects membrane potential. It leads to increased levels of hydroxyl radicals. The sequence is that of Small toxic protein ZorO from Escherichia coli O157:H7.